Consider the following 323-residue polypeptide: Ficolin-2 (323 aa).

The signal sequence occupies residues M1–A26. A Collagen-like domain is found at G52–S102. Positions G55–S66 are enriched in low complexity. Positions G55–Q107 are disordered. Residues P75 to P86 are compositionally biased toward pro residues. The segment covering K87–S102 has biased composition (basic and acidic residues). Residues E106 to T323 form the Fibrinogen C-terminal domain. 2 cysteine pairs are disulfide-bonded: C108/C136 and C115/C143. N249 carries N-linked (GlcNAc...) asparagine glycosylation. Ca(2+)-binding residues include D259, D261, and S265. A disulfide bridge links C267 with C280. Residues N302 and N310 are each glycosylated (N-linked (GlcNAc...) asparagine).

The protein belongs to the ficolin lectin family. In terms of assembly, homotrimer. Interacts with elastin. Interacts with MASP1 and MASP2. As to expression, mainly expressed in skeletal muscle.

It is found in the secreted. Its function is as follows. May function in innate immunity through activation of the lectin complement pathway. Calcium-dependent and GlcNAc-binding lectin. The protein is Ficolin-2 (FCN2) of Sus scrofa (Pig).